Reading from the N-terminus, the 259-residue chain is Deoxyribose-phosphate aldolase (259 aa).

The active-site Proton donor/acceptor is Asp102. Lys167 acts as the Schiff-base intermediate with acetaldehyde in catalysis. Lys201 (proton donor/acceptor) is an active-site residue.

The protein belongs to the DeoC/FbaB aldolase family. DeoC type 2 subfamily.

It is found in the cytoplasm. It carries out the reaction 2-deoxy-D-ribose 5-phosphate = D-glyceraldehyde 3-phosphate + acetaldehyde. It functions in the pathway carbohydrate degradation; 2-deoxy-D-ribose 1-phosphate degradation; D-glyceraldehyde 3-phosphate and acetaldehyde from 2-deoxy-alpha-D-ribose 1-phosphate: step 2/2. In terms of biological role, catalyzes a reversible aldol reaction between acetaldehyde and D-glyceraldehyde 3-phosphate to generate 2-deoxy-D-ribose 5-phosphate. This chain is Deoxyribose-phosphate aldolase, found in Salmonella dublin (strain CT_02021853).